The following is a 228-amino-acid chain: MKVVVSIGGSVLAPDLDADRVADYADAIQSLDAQGHTLGTVVGGGPTARDYIGSARDLGANEIELDQLGIAVTRLNGRLLIAALDDRAAPTPAESYDEGREAIRRGDIPVLGGIVAAQTTDAVAAAFAEYVGADLLVYATSVPGVYNADPNEDDDATRFDELGADELVDVIADIEMDAGSSAPVDLLAAKIIQRSGIRTMVLDGTDPERVVRAVEDGEFDGSEILPEA.

ATP is bound at residue 9–10 (GS). Glycine 44 is a binding site for UMP. ATP-binding residues include glycine 45 and arginine 49. Residues aspartate 66 and 114 to 120 (IVAAQTT) each bind UMP. Residues threonine 140, tyrosine 146, and aspartate 149 each coordinate ATP.

Belongs to the UMP kinase family. In terms of assembly, homohexamer.

It is found in the cytoplasm. It carries out the reaction UMP + ATP = UDP + ADP. The protein operates within pyrimidine metabolism; CTP biosynthesis via de novo pathway; UDP from UMP (UMPK route): step 1/1. Its activity is regulated as follows. Inhibited by UTP. Functionally, catalyzes the reversible phosphorylation of UMP to UDP. This chain is Uridylate kinase, found in Haloarcula marismortui (strain ATCC 43049 / DSM 3752 / JCM 8966 / VKM B-1809) (Halobacterium marismortui).